A 333-amino-acid chain; its full sequence is Phenylalanine--tRNA ligase alpha subunit (333 aa).

Glutamate 248 is a Mg(2+) binding site.

Belongs to the class-II aminoacyl-tRNA synthetase family. Phe-tRNA synthetase alpha subunit type 1 subfamily. In terms of assembly, tetramer of two alpha and two beta subunits. It depends on Mg(2+) as a cofactor.

The protein resides in the cytoplasm. The enzyme catalyses tRNA(Phe) + L-phenylalanine + ATP = L-phenylalanyl-tRNA(Phe) + AMP + diphosphate + H(+). The polypeptide is Phenylalanine--tRNA ligase alpha subunit (Ureaplasma parvum serovar 3 (strain ATCC 27815 / 27 / NCTC 11736)).